Reading from the N-terminus, the 501-residue chain is Ammonium transporter 2 member 2 (501 aa).

11 consecutive transmembrane segments (helical) span residues 35–55 (VAATFVGIQSMPGLVVIYGSI), 64–84 (SAFMALYAYASTLIVWVLVGF), 140–160 (LVLFEFEFAAITLVLLAGSLL), 174–194 (LWLLFSYTVGAFSLWGGGFLY), 203–223 (GGYVIHLSSGVAGFTAAYWVG), 238–258 (ILLMIAGGGLLWLGWAGFNGG), 274–294 (TNVSAATSLLTWTCLDVIFFG), 298–318 (VIGAVQGMMTGLVCITPGAGL), 322–342 (WSAMLMGMFAGSVPWFTMMIL), 356–376 (LAVFHTHAVAGILGGVLTGLL), and 412–432 (FVTVWNLIVTSAILLCIGLFI).

It belongs to the ammonia transporter channel (TC 1.A.11.2) family.

It localises to the membrane. Functionally, involved in ammonium transport. The sequence is that of Ammonium transporter 2 member 2 (AMT2-2) from Oryza sativa subsp. japonica (Rice).